Consider the following 500-residue polypeptide: Probable cytosol aminopeptidase (500 aa).

Lysine 264 and aspartate 269 together coordinate Mn(2+). The active site involves lysine 276. Positions 287, 346, and 348 each coordinate Mn(2+). Residue arginine 350 is part of the active site.

It belongs to the peptidase M17 family. Requires Mn(2+) as cofactor.

The protein localises to the cytoplasm. It catalyses the reaction Release of an N-terminal amino acid, Xaa-|-Yaa-, in which Xaa is preferably Leu, but may be other amino acids including Pro although not Arg or Lys, and Yaa may be Pro. Amino acid amides and methyl esters are also readily hydrolyzed, but rates on arylamides are exceedingly low.. The enzyme catalyses Release of an N-terminal amino acid, preferentially leucine, but not glutamic or aspartic acids.. Functionally, presumably involved in the processing and regular turnover of intracellular proteins. Catalyzes the removal of unsubstituted N-terminal amino acids from various peptides. This Nitrobacter winogradskyi (strain ATCC 25391 / DSM 10237 / CIP 104748 / NCIMB 11846 / Nb-255) protein is Probable cytosol aminopeptidase.